The sequence spans 333 residues: tRNA(Ile)-lysidine synthase (333 aa).

33–38 provides a ligand contact to ATP; it reads SGGADS.

The protein belongs to the tRNA(Ile)-lysidine synthase family.

The protein localises to the cytoplasm. It catalyses the reaction cytidine(34) in tRNA(Ile2) + L-lysine + ATP = lysidine(34) in tRNA(Ile2) + AMP + diphosphate + H(+). Ligates lysine onto the cytidine present at position 34 of the AUA codon-specific tRNA(Ile) that contains the anticodon CAU, in an ATP-dependent manner. Cytidine is converted to lysidine, thus changing the amino acid specificity of the tRNA from methionine to isoleucine. In Salinispora tropica (strain ATCC BAA-916 / DSM 44818 / JCM 13857 / NBRC 105044 / CNB-440), this protein is tRNA(Ile)-lysidine synthase.